The chain runs to 182 residues: ATP-dependent protease subunit HslV (182 aa).

Thr-12 is an active-site residue. The Na(+) site is built by Ala-167, Cys-170, and Thr-173.

It belongs to the peptidase T1B family. HslV subfamily. A double ring-shaped homohexamer of HslV is capped on each side by a ring-shaped HslU homohexamer. The assembly of the HslU/HslV complex is dependent on binding of ATP.

It is found in the cytoplasm. The enzyme catalyses ATP-dependent cleavage of peptide bonds with broad specificity.. Allosterically activated by HslU binding. Functionally, protease subunit of a proteasome-like degradation complex believed to be a general protein degrading machinery. The chain is ATP-dependent protease subunit HslV from Chlorobium chlorochromatii (strain CaD3).